A 210-amino-acid polypeptide reads, in one-letter code: Transcriptional regulator DauR (210 aa).

The protein belongs to the DauR family.

DauR represses the dauBAR operon. This is Transcriptional regulator DauR from Pseudomonas aeruginosa (strain ATCC 15692 / DSM 22644 / CIP 104116 / JCM 14847 / LMG 12228 / 1C / PRS 101 / PAO1).